A 380-amino-acid polypeptide reads, in one-letter code: MSTPRVMVGVSGGVDSSVAAWRLVQQGEAVAGLFMQNWADDGSGDCRAEDDRRDAVAVCGLLGIPFHFRDFSSEYWQGVFEHFLAEYAAGRTPNPDVLCNREVKFKHFLDAARELGAERIATGHYARVTQRGHQWLLLRGADRSKDQSYFLHQLGQEQLAATLFPIGDLEKTDLRRIARDVSLPTHAKKDSTGICFIGERDFREFLGRYLPAKPGQILDPADGSVIAEHPGVFYFTLGQREGLNIGGVRGRPAAPWYVVGKDVASNVLYVDQDRDSKWMLSERLRSETAHWIAGSPPARRFECTAQTRYRQPDEPCTVQVLDDGSVLVTFARPQRAVTPGQSLVLYDGDVCLGGAVIAATDAPLEQRLRTTPSPFEVIAA.

Residues 9–16 (GVSGGVDS) and methionine 35 each bind ATP. The interval 94-96 (NPD) is interaction with target base in tRNA. Cysteine 99 serves as the catalytic Nucleophile. A disulfide bridge links cysteine 99 with cysteine 195. Glycine 123 provides a ligand contact to ATP. The tract at residues 145–147 (KDQ) is interaction with tRNA. Catalysis depends on cysteine 195, which acts as the Cysteine persulfide intermediate. Residues 308 to 309 (RY) are interaction with tRNA.

It belongs to the MnmA/TRMU family.

The protein localises to the cytoplasm. The enzyme catalyses S-sulfanyl-L-cysteinyl-[protein] + uridine(34) in tRNA + AH2 + ATP = 2-thiouridine(34) in tRNA + L-cysteinyl-[protein] + A + AMP + diphosphate + H(+). Its function is as follows. Catalyzes the 2-thiolation of uridine at the wobble position (U34) of tRNA, leading to the formation of s(2)U34. The polypeptide is tRNA-specific 2-thiouridylase MnmA (Stenotrophomonas maltophilia (strain K279a)).